A 316-amino-acid polypeptide reads, in one-letter code: MRLMKEVRGRNQTEVTEFLLLGLSDNPDLQGVLFALFLLIYMANMVGNLGMIVLIKIDLCLHTPMYFFLSSLSFVDASYSSSVTPKMLVNLMAENKAISFHGCAAQFYFFGSFLGTECFLLAMMAYDRYAAIWNPLLYPVLVSGRICFLLIATSFLAGCGNAAIHTGMTFRLSFCGSNRINHFYCDTPPLLKLSCSDTHFNGIVIMAFSSFIVISCVMIVLISYLCIFIAVLKMPSLEGRHKAFSTCASYLMAVTIFFGTILFMYLRPTSSYSMEQDKVVSVFYTVIIPVLNPLIYSLKNKDVKKALKKILWKHIL.

At 1–34 (MRLMKEVRGRNQTEVTEFLLLGLSDNPDLQGVLF) the chain is on the extracellular side. Residue N11 is glycosylated (N-linked (GlcNAc...) asparagine). The helical transmembrane segment at 35–55 (ALFLLIYMANMVGNLGMIVLI) threads the bilayer. K56 is a topological domain (cytoplasmic). The helical transmembrane segment at 57-77 (IDLCLHTPMYFFLSSLSFVDA) threads the bilayer. Residues 78-104 (SYSSSVTPKMLVNLMAENKAISFHGCA) are Extracellular-facing. An intrachain disulfide couples C103 to C195. A helical transmembrane segment spans residues 105 to 125 (AQFYFFGSFLGTECFLLAMMA). The Cytoplasmic segment spans residues 126-135 (YDRYAAIWNP). Residues 136 to 156 (LLYPVLVSGRICFLLIATSFL) form a helical membrane-spanning segment. At 157–210 (AGCGNAAIHTGMTFRLSFCGSNRINHFYCDTPPLLKLSCSDTHFNGIVIMAFSS) the chain is on the extracellular side. A helical transmembrane segment spans residues 211-231 (FIVISCVMIVLISYLCIFIAV). At 232–245 (LKMPSLEGRHKAFS) the chain is on the cytoplasmic side. The helical transmembrane segment at 246–266 (TCASYLMAVTIFFGTILFMYL) threads the bilayer. Residues 267 to 278 (RPTSSYSMEQDK) are Extracellular-facing. Residues 279–299 (VVSVFYTVIIPVLNPLIYSLK) traverse the membrane as a helical segment. Over 300-316 (NKDVKKALKKILWKHIL) the chain is Cytoplasmic.

This sequence belongs to the G-protein coupled receptor 1 family.

The protein resides in the cell membrane. In terms of biological role, odorant receptor. The polypeptide is Olfactory receptor 5AP2 (Homo sapiens (Human)).